A 207-amino-acid polypeptide reads, in one-letter code: Cytochrome c biogenesis ATP-binding export protein CcmA (207 aa).

The 204-residue stretch at 3 to 206 folds into the ABC transporter domain; the sequence is LMAEGLSARR…AKSLEMTGFV (204 aa). 35–42 contacts ATP; sequence GPNGAGKS.

The protein belongs to the ABC transporter superfamily. CcmA exporter (TC 3.A.1.107) family. In terms of assembly, the complex is composed of two ATP-binding proteins (CcmA) and two transmembrane proteins (CcmB).

It localises to the cell inner membrane. It carries out the reaction heme b(in) + ATP + H2O = heme b(out) + ADP + phosphate + H(+). Functionally, part of the ABC transporter complex CcmAB involved in the biogenesis of c-type cytochromes; once thought to export heme, this seems not to be the case, but its exact role is uncertain. Responsible for energy coupling to the transport system. The protein is Cytochrome c biogenesis ATP-binding export protein CcmA of Rhizobium meliloti (strain 1021) (Ensifer meliloti).